We begin with the raw amino-acid sequence, 491 residues long: Trigger factor (491 aa).

Residues 169–254 (GDRVTIDYLG…VKDVAAAAPI (86 aa)) form the PPIase FKBP-type domain. Positions 434–491 (KVSKEELTAEDDADEKPAKKTASKKKAAAKADAAEGEEAAAPKRKAPAKKKASDESAE) are disordered. Residues 452 to 461 (KKTASKKKAA) are compositionally biased toward basic residues.

This sequence belongs to the FKBP-type PPIase family. Tig subfamily.

The protein localises to the cytoplasm. It carries out the reaction [protein]-peptidylproline (omega=180) = [protein]-peptidylproline (omega=0). Involved in protein export. Acts as a chaperone by maintaining the newly synthesized protein in an open conformation. Functions as a peptidyl-prolyl cis-trans isomerase. The sequence is that of Trigger factor from Sinorhizobium medicae (strain WSM419) (Ensifer medicae).